Reading from the N-terminus, the 170-residue chain is Peptide deformylase (170 aa).

Fe cation contacts are provided by Cys91 and His133. Glu134 is an active-site residue. His137 contacts Fe cation.

This sequence belongs to the polypeptide deformylase family. Fe(2+) serves as cofactor.

It catalyses the reaction N-terminal N-formyl-L-methionyl-[peptide] + H2O = N-terminal L-methionyl-[peptide] + formate. Its function is as follows. Removes the formyl group from the N-terminal Met of newly synthesized proteins. Requires at least a dipeptide for an efficient rate of reaction. N-terminal L-methionine is a prerequisite for activity but the enzyme has broad specificity at other positions. The polypeptide is Peptide deformylase (Pectobacterium carotovorum subsp. carotovorum (strain PC1)).